The sequence spans 425 residues: Serine--tRNA ligase (425 aa).

227 to 229 serves as a coordination point for L-serine; sequence TAE. Residues 258–260 and V274 each bind ATP; that span reads RRE. Position 281 (E281) interacts with L-serine. Residue 347 to 350 coordinates ATP; that stretch reads ETHS. T382 contributes to the L-serine binding site.

The protein belongs to the class-II aminoacyl-tRNA synthetase family. Type-1 seryl-tRNA synthetase subfamily. Homodimer. The tRNA molecule binds across the dimer.

Its subcellular location is the cytoplasm. The enzyme catalyses tRNA(Ser) + L-serine + ATP = L-seryl-tRNA(Ser) + AMP + diphosphate + H(+). It carries out the reaction tRNA(Sec) + L-serine + ATP = L-seryl-tRNA(Sec) + AMP + diphosphate + H(+). It functions in the pathway aminoacyl-tRNA biosynthesis; selenocysteinyl-tRNA(Sec) biosynthesis; L-seryl-tRNA(Sec) from L-serine and tRNA(Sec): step 1/1. Its function is as follows. Catalyzes the attachment of serine to tRNA(Ser). Is also able to aminoacylate tRNA(Sec) with serine, to form the misacylated tRNA L-seryl-tRNA(Sec), which will be further converted into selenocysteinyl-tRNA(Sec). The protein is Serine--tRNA ligase of Deinococcus radiodurans (strain ATCC 13939 / DSM 20539 / JCM 16871 / CCUG 27074 / LMG 4051 / NBRC 15346 / NCIMB 9279 / VKM B-1422 / R1).